We begin with the raw amino-acid sequence, 1001 residues long: Kinesin-like protein KIN-14P (1001 aa).

Residues 53 to 172 enclose the Calponin-homology (CH) domain; that stretch reads AIRRYEAANW…CVLSLRSFSE (120 aa). Basic and acidic residues predominate over residues 284 to 300; that stretch reads NESVKHALDPNDDKLLS. Residues 284–322 form a disordered region; sequence NESVKHALDPNDDKLLSRADTPPEMESTCTCSTGNMDEE. Residues 426-748 form the Kinesin motor domain; that stretch reads NIRVYCRVRP…LKFAERVATV (323 aa). 509 to 516 provides a ligand contact to ATP; that stretch reads GQTGSGKT. Residues 756–784 adopt a coiled-coil conformation; the sequence is NKEGGEVKELKEQIACLKAALAKKDGETE. 2 disordered regions span residues 804-830 and 890-1001; these read PPAF…QKKR and EPQW…SAKK. A compositionally biased stretch (polar residues) spans 972–984; the sequence is PSASTKNGKQLSL.

It belongs to the TRAFAC class myosin-kinesin ATPase superfamily. Kinesin family. KIN-14 subfamily.

This chain is Kinesin-like protein KIN-14P, found in Oryza sativa subsp. japonica (Rice).